Here is a 541-residue protein sequence, read N- to C-terminus: Eukaryotic translation initiation factor 3 subunit L (541 aa).

In terms of domain architecture, PCI spans 308–516 (TFSDILLYIQ…IHIADTKVSH (209 aa)).

It belongs to the eIF-3 subunit L family. As to quaternary structure, component of the eukaryotic translation initiation factor 3 (eIF-3) complex. The eIF-3 complex interacts with pix.

Its subcellular location is the cytoplasm. In terms of biological role, component of the eukaryotic translation initiation factor 3 (eIF-3) complex, which is involved in protein synthesis of a specialized repertoire of mRNAs and, together with other initiation factors, stimulates binding of mRNA and methionyl-tRNAi to the 40S ribosome. The eIF-3 complex specifically targets and initiates translation of a subset of mRNAs involved in cell proliferation. This is Eukaryotic translation initiation factor 3 subunit L from Drosophila persimilis (Fruit fly).